The sequence spans 591 residues: N-acetylgalactosaminyltransferase 7 (591 aa).

Residues 1–11 are Cytoplasmic-facing; that stretch reads MRVSTIRSGRI. A helical; Signal-anchor for type II membrane protein membrane pass occupies residues 12–29; sequence CRLALCLLVLLPLLYLLA. Asn30 is a glycosylation site (N-linked (GlcNAc...) asparagine). Residues 30–591 are Lumenal-facing; that stretch reads NWSDHHKRVQ…WWFKEIRPRW (562 aa). Positions 68-100 are disordered; sequence DGLGNFEPKDVKPRSGPGENGEAHSLSPDKKHM. 5 disulfide bridges follow: Cys132/Cys367, Cys358/Cys441, Cys479/Cys496, Cys519/Cys532, and Cys558/Cys573. Positions 141–251 are catalytic subdomain A; the sequence is LPRTSVIIVF…TNWLPPLLAP (111 aa). The substrate site is built by Asp182 and Arg212. Positions 235 and 237 each coordinate Mn(2+). Residues 313–375 form a catalytic subdomain B region; the sequence is PYRSPTHAGG…PCSRVGHVYR (63 aa). Residue Trp344 coordinates substrate. His372 contributes to the Mn(2+) binding site. Substrate is bound by residues Arg375 and Tyr380. Residues 466-585 enclose the Ricin B-type lectin domain; it reads LHWGELRSVA…NDSYQQWWFK (120 aa). N-linked (GlcNAc...) asparagine glycosylation is present at Asn576.

Belongs to the glycosyltransferase 2 family. GalNAc-T subfamily. Mn(2+) serves as cofactor. Expressed in developing oocytes and egg chambers. During embryonic stages 9-11, expressed in the primordium of the foregut, midgut and hindgut. Expressed in the salivary glands from embryonic stage 12 onwards. During embryonic stages 12-13, expressed in the posterior midgut and hindgut. During embryonic stages 14-15, expression continues in the hindgut. During embryonic stages 16-17, expressed in the antennomaxillary complex. In third instar larvae, ubiquitously expressed in wing, with increased expression in the notum and ventral wing pouch, eye-antennal, leg and haltere imaginal disks.

It localises to the golgi apparatus membrane. The catalysed reaction is L-seryl-[protein] + UDP-N-acetyl-alpha-D-galactosamine = a 3-O-[N-acetyl-alpha-D-galactosaminyl]-L-seryl-[protein] + UDP + H(+). It carries out the reaction L-threonyl-[protein] + UDP-N-acetyl-alpha-D-galactosamine = a 3-O-[N-acetyl-alpha-D-galactosaminyl]-L-threonyl-[protein] + UDP + H(+). The protein operates within protein modification; protein glycosylation. Functionally, glycopeptide transferase involved in O-linked oligosaccharide biosynthesis, which catalyzes the transfer of an N-acetyl-D-galactosamine residue to an already glycosylated peptide. In contrast to other proteins of the family, it does not act as a peptide transferase that transfers GalNAc onto serine or threonine residue on the protein receptor, but instead requires the prior addition of a GalNAc on a peptide before adding additional GalNAc moieties. Some peptide transferase activity is however not excluded, considering that its appropriate peptide substrate may remain unidentified. Prefers the monoglycosylated Muc5AC-3 as substrate. Might have a role in protein O-glycosylation in the Golgi and thereby in establishing and/or maintaining a proper secretory apparatus structure. The sequence is that of N-acetylgalactosaminyltransferase 7 from Drosophila melanogaster (Fruit fly).